Here is a 352-residue protein sequence, read N- to C-terminus: Protein Wnt-3a (352 aa).

Residues 1–18 form the signal peptide; the sequence is MAPLGYLLVLCSLKQALG. 11 disulfides stabilise this stretch: cysteine 77/cysteine 88, cysteine 128/cysteine 136, cysteine 138/cysteine 155, cysteine 203/cysteine 217, cysteine 205/cysteine 212, cysteine 281/cysteine 312, cysteine 297/cysteine 307, cysteine 311/cysteine 351, cysteine 327/cysteine 342, cysteine 329/cysteine 339, and cysteine 334/cysteine 335. Asparagine 87 carries an N-linked (GlcNAc...) asparagine glycan. Serine 209 carries O-palmitoleoyl serine; by PORCN lipidation. N-linked (GlcNAc...) asparagine glycosylation is present at asparagine 298.

The protein belongs to the Wnt family. In terms of assembly, forms a soluble 1:1 complex with AFM; this prevents oligomerization and is required for prolonged biological activity. The complex with AFM may represent the physiological form in body fluids. Homooligomer; disulfide-linked, leading to inactivation. Interacts with APCDD1 and WLS. Component of the Wnt-Fzd-LRP5-LRP6 signaling complex that contains a WNT protein, a FZD protein and LRP5 or LRP6. Interacts directly in the complex with LRP6. Interacts with PORCN. Interacts with glypican GPC3. Interacts with PKD1 (via extracellular domain). Interacts with FZD5. Proteolytic processing by TIKI1 and TIKI2 promotes oxidation and formation of large disulfide-bond oligomers, leading to inactivation of WNT3A. In terms of processing, disulfide bonds have critical and distinct roles in secretion and activity. Loss of each conserved cysteine in WNT3A results in high molecular weight oxidized Wnt oligomers, which are formed through inter-Wnt disulfide bonding. Post-translationally, palmitoleoylation by PORCN is required for efficient binding to frizzled receptors. Palmitoleoylation is required for proper trafficking to cell surface, vacuolar acidification is critical to release palmitoleoylated WNT3A from WLS in secretory vesicles. Depalmitoleoylated by NOTUM, leading to inhibit Wnt signaling pathway, possibly by promoting disulfide bond formation and oligomerization. Dorsal portion of the neural tube (developing roof plate), and mesenchyme tissue surrounding the umbilical veins.

The protein localises to the secreted. Its subcellular location is the extracellular space. It is found in the extracellular matrix. Ligand for members of the frizzled family of seven transmembrane receptors. Functions in the canonical Wnt signaling pathway that results in activation of transcription factors of the TCF/LEF family. Required for normal embryonic mesoderm development and formation of caudal somites. Required for normal morphogenesis of the developing neural tube. Mediates self-renewal of the stem cells at the bottom on intestinal crypts (in vitro). This is Protein Wnt-3a (Wnt3a) from Mus musculus (Mouse).